A 563-amino-acid polypeptide reads, in one-letter code: Membrane protein insertase YidC (563 aa).

Residues 1-21 (MDIKRTILIVALAIVTYVGVL) form a helical membrane-spanning segment. A disordered region spans residues 43–62 (APGIPDTAAGTNGSASADVP). Helical transmembrane passes span 344-364 (LELT…FWLL), 370-390 (ILGN…GLFF), 440-460 (LGGC…YWVL), 471-491 (WILW…PIIM), and 518-538 (PIIF…YWVV).

The protein belongs to the OXA1/ALB3/YidC family. Type 1 subfamily. In terms of assembly, interacts with the Sec translocase complex via SecD. Specifically interacts with transmembrane segments of nascent integral membrane proteins during membrane integration.

The protein localises to the cell inner membrane. Functionally, required for the insertion and/or proper folding and/or complex formation of integral membrane proteins into the membrane. Involved in integration of membrane proteins that insert both dependently and independently of the Sec translocase complex, as well as at least some lipoproteins. Aids folding of multispanning membrane proteins. This is Membrane protein insertase YidC from Pseudomonas syringae pv. syringae (strain B728a).